Consider the following 587-residue polypeptide: MPRADPNLRNRARRPRARRGGGGGVGSNSSRHSGKCRRQRRALSAPPLTFLATTTTTTMMGVASTDDDSLLLKTPDELDKHSGSPQTILTLTDKHDIRQPRVHRGTYHLIQLHLDLRPEELRDPFQILLSTPLQLGEANGESQTAPATSQEEETAASHELEKKKEKEEKKEEEDEDDRNDDRERGILCVVSNEDSDVRPAFSLFPARPGCHILRSVIDQQLTRMAIVRLSLNLFALRIITPPLKRVPLRRKAAHHTALHDCMALHLPELTFESTLDINNVTENAASVADAAESTDADLTPTLTVRVRHAVCWHRVEGGISGPRGLTSRISARLSETTAKTLGPSVFGRLELDPNESPPDLTLSSLTLYQDGMLRFNVTCDRTEAPADPVAFRLRLRRETVRRPFFSDAPLPYFVPPRSGAADEGLEVRVPYELTLKNSHTLRIYRRFYGPYLGVFVPHNRQGLKMPVTVWLPRSWLELTVLVSDENGATFPRDALLGRLYFISSKHTLNRGCLSAMTHQVKSTLHSRSTSHSPSQQQLSVLGASIALEDLLPMRLASPETEPQDCKLTENTTEKTSPVTLAMVCGDL.

2 disordered regions span residues 1–48 (MPRA…APPL) and 136–185 (GEAN…RERG). Composition is skewed to basic residues over residues 10-19 (NRARRPRARR) and 32-41 (HSGKCRRQRR). Polar residues predominate over residues 140–149 (GESQTAPATS). A compositionally biased stretch (basic and acidic residues) spans 155-169 (AASHELEKKKEKEEK). The Nuclear localization signal signature appears at 161-170 (EKKKEKEEKK). Positions 229-238 (LSLNLFALRI) match the Nuclear export signal 1 (NES 1) motif. Positions 360 to 367 (LTLSSLTL) match the Nuclear export signal 2 (NES 2) motif.

Belongs to the HHV-5 UL84 protein family. Interacts with the DNA polymerase accessory subunit UL44. Interacts with HCMV major transcription-activating enzyme IE2. Interacts with host HNRNPK.

The protein resides in the host nucleus. It localises to the host cytoplasm. Its function is as follows. Plays an essential role in viral DNA replication. May participate in the DNA replication initiation by interacting with the origin of lytic replication, oriLyt and subsequently recruiting other viral/cellular factors. Additionally, interacts with and shuttles IRS1 viral mRNA from the host nucleus to the cytoplasm. In Human cytomegalovirus (strain Towne) (HHV-5), this protein is UL84 protein (UL84).